We begin with the raw amino-acid sequence, 595 residues long: Pyranose dehydrogenase (595 aa).

The signal sequence occupies residues 1-21; sequence MARFNARLFSIAILGFQVARS. N-linked (GlcNAc...) asparagine glycosylation is found at N95 and N110. A Tele-8alpha-FAD histidine modification is found at H123. N-linked (GlcNAc...) asparagine glycans are attached at residues N195, N337, N367, N502, and N510. The Proton acceptor role is filled by H530. N541 carries an N-linked (GlcNAc...) asparagine glycan. H574 is a catalytic residue.

The protein belongs to the GMC oxidoreductase family. Monomer. It depends on FAD as a cofactor. Post-translationally, N-glycosylated.

It localises to the secreted. The catalysed reaction is pyranose + acceptor = pyranos-2-ulose + reduced acceptor.. The enzyme catalyses pyranose + acceptor = pyranos-3-ulose + reduced acceptor.. It catalyses the reaction pyranose + acceptor = pyranos-2,3-diulose + reduced acceptor.. It carries out the reaction a pyranoside + acceptor = a pyranosid-3-ulose + reduced acceptor.. The catalysed reaction is a pyranoside + acceptor = a pyranosid-3,4-diulose + reduced acceptor.. Its function is as follows. Catalyzes the single-oxidation or sequential double oxidation reaction of carbohydrates primarily at carbon-2 and/or carbon-3 with the concomitant reduction of the flavin. The enzyme exhibits a broad sugar substrate specificity, oxidizing different aldopyranoses to the corresponding C-1, C-2, C-3 or C-1,2, C-2,3 and C-3,4 (di)dehydro sugars with substrate-specific regioselectivity. Accepts only a narrow range of electron acceptors such as substituted benzoquinones and complexed metal ions and reacts extremely slowly with O(2) as acceptor. May play a role in the natural recycling of plant matter by oxidizing all major monosaccharides in lignocellulose and by reducing quinone compounds or reactive radical species generated during lignin depolymerization. This Agaricus campestris (Field mushroom) protein is Pyranose dehydrogenase.